The following is a 122-amino-acid chain: Large ribosomal subunit protein uL14 (122 aa).

This sequence belongs to the universal ribosomal protein uL14 family. In terms of assembly, part of the 50S ribosomal subunit. Forms a cluster with proteins L3 and L19. In the 70S ribosome, L14 and L19 interact and together make contacts with the 16S rRNA in bridges B5 and B8.

In terms of biological role, binds to 23S rRNA. Forms part of two intersubunit bridges in the 70S ribosome. The sequence is that of Large ribosomal subunit protein uL14 from Campylobacter concisus (strain 13826).